A 366-amino-acid chain; its full sequence is MAFAGLKKQINKANQYMTEKMGGAEGTKLDMDFMEMERKTDVTVELVEELQLKTKEFLQPNPTARAKMAAVKGISKLSGQAKSNTYPQPEGLLAECMLTYGKKLGEDNSVFAQALVEFGEALKQMADVKYSLDDNIKQNFLEPLHHMQTKDLKEVMHHRKKLQGRRLDFDCKRRRQAKDDEIRGAEDKFGESLQLAQVGMFNLLENDTEHVSQLVTFAEALYDFHSQCADVLRGLQETLQEKRSEAESRPRNEFVPKTLLDLNLDGGGGGLNEDGTPSHISSSASPLPSPMRSPAKSMAVTPQRQQQPCCQALYDFDPENPGELGFKENDIITLLNRVDDNWYEGSVNGRTGYFPQSYVQVQVPLP.

In terms of domain architecture, BAR spans 18-248 (TEKMGGAEGT…LQEKRSEAES (231 aa)). Residues 227-247 (QCADVLRGLQETLQEKRSEAE) adopt a coiled-coil conformation. The disordered stretch occupies residues 266 to 295 (GGGGGLNEDGTPSHISSSASPLPSPMRSPA). Low complexity predominate over residues 277–294 (PSHISSSASPLPSPMRSP). Residues 305–364 (QQQPCCQALYDFDPENPGELGFKENDIITLLNRVDDNWYEGSVNGRTGYFPQSYVQVQVP) enclose the SH3 domain.

This sequence belongs to the endophilin family.

Its subcellular location is the cytoplasm. It localises to the membrane. Required presynaptically at the neuromuscular junction. Implicated in synaptic vesicle endocytosis. The sequence is that of Endophilin-A from Drosophila willistoni (Fruit fly).